A 330-amino-acid polypeptide reads, in one-letter code: Embigin (330 aa).

The N-terminal stretch at 1-33 is a signal peptide; sequence MRSHTGLRALVAPGYPLLLLCLLAATRPDPAEG. Residues 34–254 are Extracellular-facing; sequence DPTDPTFTSL…QLGESEEQNE (221 aa). 2 consecutive Ig-like V-type domains span residues 38–161 and 162–256; these read PTFT…IHVP and KAHG…NELV. N-linked (GlcNAc...) asparagine glycans are attached at residues N55, N62, N70, N101, N118, N191, N198, N216, and N221. 2 cysteine pairs are disulfide-bonded: C89/C145 and C182/C240. A helical transmembrane segment spans residues 255 to 283; sequence LVVLSFLVPLKPFLAILAEVILLVAIILL. The Cytoplasmic segment spans residues 284 to 330; it reads CEVYTHKKKNDPDAGKEFEQIEQLKSDDSNGIENNVPRYRKTDSADQ. The segment covering 293 to 311 has biased composition (basic and acidic residues); it reads NDPDAGKEFEQIEQLKSDD. The interval 293 to 330 is disordered; it reads NDPDAGKEFEQIEQLKSDDSNGIENNVPRYRKTDSADQ. S312 is subject to Phosphoserine.

In terms of assembly, interacts with SLC16A1, SLC16A6 and SLC16A7. In terms of tissue distribution, only member of the immunoglobulin superfamily to be expressed in embryonal carcinoma cells, which resemble multipotential cells of early embryos.

It localises to the cell membrane. It is found in the synapse. Its function is as follows. Plays a role in targeting the monocarboxylate transporters SLC16A1, SLC16A6 and SLC16A7 to the cell membrane. Plays a role in the outgrowth of motoneurons and in the formation of neuromuscular junctions. Following muscle denervation, promotes nerve terminal sprouting and the formation of additional acetylcholine receptor clusters at synaptic sites without affecting terminal Schwann cell number or morphology. Delays the retraction of terminal sprouts following re-innervation of denervated endplates. The sequence is that of Embigin (Emb) from Mus musculus (Mouse).